A 448-amino-acid polypeptide reads, in one-letter code: Argininosuccinate synthase (448 aa).

ATP-binding positions include 17 to 25 and Ala43; that span reads AFSGGLDTS. Residue Tyr99 participates in L-citrulline binding. Gly129 and Thr131 together coordinate ATP. 3 residues coordinate L-aspartate: Thr131, Asn135, and Asp136. L-citrulline is bound at residue Asn135. Asp136 is an ATP binding site. Positions 139 and 192 each coordinate L-citrulline. An ATP-binding site is contributed by Asp194. Thr201, Glu203, and Glu280 together coordinate L-citrulline.

The protein belongs to the argininosuccinate synthase family. Type 2 subfamily. Homotetramer.

The protein localises to the cytoplasm. It carries out the reaction L-citrulline + L-aspartate + ATP = 2-(N(omega)-L-arginino)succinate + AMP + diphosphate + H(+). It functions in the pathway amino-acid biosynthesis; L-arginine biosynthesis; L-arginine from L-ornithine and carbamoyl phosphate: step 2/3. This chain is Argininosuccinate synthase, found in Acidovorax ebreus (strain TPSY) (Diaphorobacter sp. (strain TPSY)).